The sequence spans 175 residues: NADH-ubiquinone oxidoreductase chain 6 (175 aa).

The next 5 helical transmembrane spans lie at 1–21 (MMTYFVFILSTVFVIGFVGFS), 27–47 (VYGGVGLIISGGVGCGIVMNF), 49–69 (GSFLGLMVFLIYLGGMMVVFG), 88–108 (VVLGAFVSGLFMEMLLVLYVL), and 149–169 (YGVWLVVVTGWSLFIAVVVIM).

This sequence belongs to the complex I subunit 6 family. In terms of assembly, core subunit of respiratory chain NADH dehydrogenase (Complex I) which is composed of 45 different subunits.

The protein resides in the mitochondrion inner membrane. The enzyme catalyses a ubiquinone + NADH + 5 H(+)(in) = a ubiquinol + NAD(+) + 4 H(+)(out). In terms of biological role, core subunit of the mitochondrial membrane respiratory chain NADH dehydrogenase (Complex I) which catalyzes electron transfer from NADH through the respiratory chain, using ubiquinone as an electron acceptor. Essential for the catalytic activity and assembly of complex I. This is NADH-ubiquinone oxidoreductase chain 6 (MT-ND6) from Pteropus dasymallus (Ryukyu flying fox).